Consider the following 307-residue polypeptide: Ornithine carbamoyltransferase (307 aa).

Carbamoyl phosphate-binding positions include 54-57 (STRT), Q81, R105, and 132-135 (HPCQ). L-ornithine contacts are provided by residues N163, D221, and 225–226 (SM). Carbamoyl phosphate contacts are provided by residues 261 to 262 (CL) and R289.

It belongs to the aspartate/ornithine carbamoyltransferase superfamily. OTCase family.

It is found in the cytoplasm. The enzyme catalyses carbamoyl phosphate + L-ornithine = L-citrulline + phosphate + H(+). It participates in amino-acid biosynthesis; L-arginine biosynthesis; L-arginine from L-ornithine and carbamoyl phosphate: step 1/3. Its function is as follows. Reversibly catalyzes the transfer of the carbamoyl group from carbamoyl phosphate (CP) to the N(epsilon) atom of ornithine (ORN) to produce L-citrulline. The protein is Ornithine carbamoyltransferase of Chromobacterium violaceum (strain ATCC 12472 / DSM 30191 / JCM 1249 / CCUG 213 / NBRC 12614 / NCIMB 9131 / NCTC 9757 / MK).